Consider the following 419-residue polypeptide: Zinc finger protein Pegasus (419 aa).

A Glycyl lysine isopeptide (Lys-Gly) (interchain with G-Cter in SUMO2) cross-link involves residue Lys5. C2H2-type zinc fingers lie at residues 82–104 (LKCR…IRIH), 110–132 (HRCH…MRSH), and 138–161 (YKCE…RRKH). Lys185 is covalently cross-linked (Glycyl lysine isopeptide (Lys-Gly) (interchain with G-Cter in SUMO2)). Positions 223 to 236 (QTDSYESMAKTTPT) are enriched in polar residues. 2 disordered regions span residues 223–245 (QTDS…DPQE) and 288–356 (MQQP…PTLP). Over residues 289-311 (QQPSAQAVVSAVSASLPQSSSPA) the composition is skewed to low complexity. Polar residues predominate over residues 332–349 (SEPSAHTSTPSMGNSQPS). 2 C2H2-type zinc fingers span residues 364-386 (HHCQ…MGCH) and 392-416 (FQCN…RGQH).

This sequence belongs to the Ikaros C2H2-type zinc-finger protein family. In terms of assembly, self-associates. Interacts with other family members; IKZF1, IKZF2, IKZF3 and IKZF4.

It localises to the nucleus. In terms of biological role, transcriptional repressor that binds the core 5'GNNTGTNG-3' DNA consensus sequence. Involved in megakaryocyte differentiation. The protein is Zinc finger protein Pegasus (IKZF5) of Bos taurus (Bovine).